Consider the following 235-residue polypeptide: Orotidine 5'-phosphate decarboxylase (235 aa).

Substrate is bound by residues Asp-12, Lys-34, Asp-61–Thr-70, Thr-116, Arg-177, Gln-186, Gly-206, and Arg-207. Lys-63 serves as the catalytic Proton donor.

It belongs to the OMP decarboxylase family. Type 1 subfamily. In terms of assembly, homodimer.

It catalyses the reaction orotidine 5'-phosphate + H(+) = UMP + CO2. Its pathway is pyrimidine metabolism; UMP biosynthesis via de novo pathway; UMP from orotate: step 2/2. Its function is as follows. Catalyzes the decarboxylation of orotidine 5'-monophosphate (OMP) to uridine 5'-monophosphate (UMP). The chain is Orotidine 5'-phosphate decarboxylase from Rhizobium johnstonii (strain DSM 114642 / LMG 32736 / 3841) (Rhizobium leguminosarum bv. viciae).